The following is a 185-amino-acid chain: Ribosome-recycling factor (185 aa).

The protein belongs to the RRF family.

Its subcellular location is the cytoplasm. In terms of biological role, responsible for the release of ribosomes from messenger RNA at the termination of protein biosynthesis. May increase the efficiency of translation by recycling ribosomes from one round of translation to another. This Pseudomonas fluorescens (strain ATCC BAA-477 / NRRL B-23932 / Pf-5) protein is Ribosome-recycling factor.